Here is a 428-residue protein sequence, read N- to C-terminus: Serine--tRNA ligase (428 aa).

231–233 (TSE) contributes to the L-serine binding site. Residues 262–264 (RRE) and valine 278 contribute to the ATP site. Position 285 (glutamate 285) interacts with L-serine. Position 349 to 352 (349 to 352 (ELTS)) interacts with ATP. An L-serine-binding site is contributed by threonine 384.

It belongs to the class-II aminoacyl-tRNA synthetase family. Type-1 seryl-tRNA synthetase subfamily. Homodimer. The tRNA molecule binds across the dimer.

It is found in the cytoplasm. It catalyses the reaction tRNA(Ser) + L-serine + ATP = L-seryl-tRNA(Ser) + AMP + diphosphate + H(+). The catalysed reaction is tRNA(Sec) + L-serine + ATP = L-seryl-tRNA(Sec) + AMP + diphosphate + H(+). It functions in the pathway aminoacyl-tRNA biosynthesis; selenocysteinyl-tRNA(Sec) biosynthesis; L-seryl-tRNA(Sec) from L-serine and tRNA(Sec): step 1/1. In terms of biological role, catalyzes the attachment of serine to tRNA(Ser). Is also able to aminoacylate tRNA(Sec) with serine, to form the misacylated tRNA L-seryl-tRNA(Sec), which will be further converted into selenocysteinyl-tRNA(Sec). This chain is Serine--tRNA ligase, found in Bifidobacterium longum (strain DJO10A).